Consider the following 357-residue polypeptide: Geranylgeranyl pyrophosphate synthase 11, chloroplastic (357 aa).

The transit peptide at methionine 1–serine 37 directs the protein to the chloroplast. 3 residues coordinate isopentenyl diphosphate: lysine 103, arginine 106, and histidine 135. 2 residues coordinate Mg(2+): aspartate 142 and aspartate 148. Arginine 153 lines the dimethylallyl diphosphate pocket. Arginine 154 is an isopentenyl diphosphate binding site. The dimethylallyl diphosphate site is built by lysine 242, threonine 243, glutamine 280, lysine 297, and lysine 307.

The protein belongs to the FPP/GGPP synthase family. As to quaternary structure, monomer. Mg(2+) serves as cofactor.

Its subcellular location is the plastid. The protein localises to the chloroplast. It catalyses the reaction isopentenyl diphosphate + dimethylallyl diphosphate = (2E)-geranyl diphosphate + diphosphate. It carries out the reaction isopentenyl diphosphate + (2E)-geranyl diphosphate = (2E,6E)-farnesyl diphosphate + diphosphate. The catalysed reaction is isopentenyl diphosphate + (2E,6E)-farnesyl diphosphate = (2E,6E,10E)-geranylgeranyl diphosphate + diphosphate. It participates in isoprenoid biosynthesis; farnesyl diphosphate biosynthesis; farnesyl diphosphate from geranyl diphosphate and isopentenyl diphosphate: step 1/1. Its pathway is isoprenoid biosynthesis; geranyl diphosphate biosynthesis; geranyl diphosphate from dimethylallyl diphosphate and isopentenyl diphosphate: step 1/1. The protein operates within isoprenoid biosynthesis; geranylgeranyl diphosphate biosynthesis; geranylgeranyl diphosphate from farnesyl diphosphate and isopentenyl diphosphate: step 1/1. Catalyzes the trans-addition of the three molecules of IPP onto DMAPP to form geranylgeranyl pyrophosphate. In Arabidopsis thaliana (Mouse-ear cress), this protein is Geranylgeranyl pyrophosphate synthase 11, chloroplastic.